The sequence spans 339 residues: Phosphate acyltransferase (339 aa).

It belongs to the PlsX family. Homodimer. Probably interacts with PlsY.

It is found in the cytoplasm. The enzyme catalyses a fatty acyl-[ACP] + phosphate = an acyl phosphate + holo-[ACP]. It participates in lipid metabolism; phospholipid metabolism. Its function is as follows. Catalyzes the reversible formation of acyl-phosphate (acyl-PO(4)) from acyl-[acyl-carrier-protein] (acyl-ACP). This enzyme utilizes acyl-ACP as fatty acyl donor, but not acyl-CoA. This Dechloromonas aromatica (strain RCB) protein is Phosphate acyltransferase.